The primary structure comprises 487 residues: Inosine-5'-monophosphate dehydrogenase (487 aa).

2 consecutive CBS domains span residues 93–149 (IVSD…NKTV) and 153–214 (MTPK…CKDE). NAD(+) is bound by residues aspartate 248, 248–250 (DSS), and 298–300 (GIG). 2 residues coordinate K(+): glycine 300 and glycine 302. Serine 303 is an IMP binding site. Cysteine 305 lines the K(+) pocket. Cysteine 305 acts as the Thioimidate intermediate in catalysis. Residues 338–340 (DGG), 361–362 (GS), and 385–389 (YRGMG) each bind IMP. Arginine 401 acts as the Proton acceptor in catalysis. Glutamate 415 is an IMP binding site. K(+) contacts are provided by glutamate 469, serine 470, and histidine 471.

The protein belongs to the IMPDH/GMPR family. In terms of assembly, homotetramer. K(+) is required as a cofactor.

It carries out the reaction IMP + NAD(+) + H2O = XMP + NADH + H(+). It participates in purine metabolism; XMP biosynthesis via de novo pathway; XMP from IMP: step 1/1. Its activity is regulated as follows. Mycophenolic acid (MPA) is a non-competitive inhibitor that prevents formation of the closed enzyme conformation by binding to the same site as the amobile flap. In contrast, mizoribine monophosphate (MZP) is a competitive inhibitor that induces the closed conformation. MPA is a potent inhibitor of mammalian IMPDHs but a poor inhibitor of the bacterial enzymes. MZP is a more potent inhibitor of bacterial IMPDH. Catalyzes the conversion of inosine 5'-phosphate (IMP) to xanthosine 5'-phosphate (XMP), the first committed and rate-limiting step in the de novo synthesis of guanine nucleotides, and therefore plays an important role in the regulation of cell growth. In Pasteurella multocida (strain Pm70), this protein is Inosine-5'-monophosphate dehydrogenase.